A 73-amino-acid polypeptide reads, in one-letter code: Conotoxin MaI51 (73 aa).

An N-terminal signal peptide occupies residues 1 to 19 (MQKLTILLLVAAVLLSTQA). The propeptide occupies 20 to 41 (LNQEKRPKEMINVLSKGKTNAE). A Pyrrolidone carboxylic acid modification is found at Gln46. 3 disulfides stabilise this stretch: Cys47–Cys61, Cys54–Cys65, and Cys60–Cys69. At Ile72 the chain carries Isoleucine amide.

It belongs to the conotoxin O2 superfamily. In terms of tissue distribution, expressed by the venom duct.

It is found in the secreted. The chain is Conotoxin MaI51 from Conus marmoreus (Marble cone).